Consider the following 81-residue polypeptide: Cortexin-2 (81 aa).

The helical transmembrane segment at 29 to 49 (TGFAFVGILCIFLGLLIIRCF) threads the bilayer.

It belongs to the cortexin family.

It localises to the membrane. The chain is Cortexin-2 (Ctxn2) from Mus musculus (Mouse).